A 283-amino-acid polypeptide reads, in one-letter code: MTHISTWIDEYHKGSRFGLNGEILIKQNSKYQEIIVIENEYYGRALMLDGCWMTSLKDEKYYHECLVHPALSSIDEKSNVLIIGGGDGGTARECVKYPQISKIDLVEIDEEVIKISKKFLKEIGGEAWSDKRLKIHIDDGVQWVKKTRDNFYDVIFIDCSDPSELSNLLFSDSFYRECKRILTKNGILATQSESPESFKNIHISILKTLKKFFRVSETMYSFVPIYPSGIWSWTFASEEVLHLSKRNCNEALRIEKSCEIWNLNFQNAAFKMMPNKIVKELNS.

Residues 5–238 (STWIDEYHKG…GIWSWTFASE (234 aa)) enclose the PABS domain. An S-methyl-5'-thioadenosine-binding site is contributed by Gln-32. Spermidine is bound by residues His-63 and Asp-87. S-methyl-5'-thioadenosine contacts are provided by residues Glu-107 and 139-140 (DG). The active-site Proton acceptor is the Asp-158. Spermidine is bound at residue 158 to 161 (DCSD).

This sequence belongs to the spermidine/spermine synthase family. Homodimer or homotetramer.

The protein localises to the cytoplasm. It carries out the reaction S-adenosyl 3-(methylsulfanyl)propylamine + putrescine = S-methyl-5'-thioadenosine + spermidine + H(+). Its pathway is amine and polyamine biosynthesis; spermidine biosynthesis; spermidine from putrescine: step 1/1. Functionally, catalyzes the irreversible transfer of a propylamine group from the amino donor S-adenosylmethioninamine (decarboxy-AdoMet) to putrescine (1,4-diaminobutane) to yield spermidine. This is Polyamine aminopropyltransferase from Prochlorococcus marinus (strain MIT 9312).